The primary structure comprises 399 residues: Tryptophan synthase beta chain (399 aa).

An N6-(pyridoxal phosphate)lysine modification is found at K92.

This sequence belongs to the TrpB family. As to quaternary structure, tetramer of two alpha and two beta chains. The cofactor is pyridoxal 5'-phosphate.

The catalysed reaction is (1S,2R)-1-C-(indol-3-yl)glycerol 3-phosphate + L-serine = D-glyceraldehyde 3-phosphate + L-tryptophan + H2O. The protein operates within amino-acid biosynthesis; L-tryptophan biosynthesis; L-tryptophan from chorismate: step 5/5. The beta subunit is responsible for the synthesis of L-tryptophan from indole and L-serine. The polypeptide is Tryptophan synthase beta chain (Legionella pneumophila subsp. pneumophila (strain Philadelphia 1 / ATCC 33152 / DSM 7513)).